The primary structure comprises 97 residues: Co-chaperonin GroES (97 aa).

The protein belongs to the GroES chaperonin family. Heptamer of 7 subunits arranged in a ring. Interacts with the chaperonin GroEL.

It is found in the cytoplasm. In terms of biological role, together with the chaperonin GroEL, plays an essential role in assisting protein folding. The GroEL-GroES system forms a nano-cage that allows encapsulation of the non-native substrate proteins and provides a physical environment optimized to promote and accelerate protein folding. GroES binds to the apical surface of the GroEL ring, thereby capping the opening of the GroEL channel. The chain is Co-chaperonin GroES from Buchnera aphidicola subsp. Thelaxes suberi.